A 592-amino-acid polypeptide reads, in one-letter code: UvrABC system protein C (592 aa).

Residues lysine 14–isoleucine 91 enclose the GIY-YIG domain. The 36-residue stretch at aspartate 197–isoleucine 232 folds into the UVR domain.

This sequence belongs to the UvrC family. Interacts with UvrB in an incision complex.

The protein resides in the cytoplasm. Its function is as follows. The UvrABC repair system catalyzes the recognition and processing of DNA lesions. UvrC both incises the 5' and 3' sides of the lesion. The N-terminal half is responsible for the 3' incision and the C-terminal half is responsible for the 5' incision. The protein is UvrABC system protein C of Mycoplasmoides gallisepticum (strain R(low / passage 15 / clone 2)) (Mycoplasma gallisepticum).